The chain runs to 621 residues: 1,4-alpha-glucan branching enzyme GlgB (621 aa).

Catalysis depends on aspartate 302, which acts as the Nucleophile. The active-site Proton donor is glutamate 355.

This sequence belongs to the glycosyl hydrolase 13 family. GlgB subfamily. As to quaternary structure, monomer.

It catalyses the reaction Transfers a segment of a (1-&gt;4)-alpha-D-glucan chain to a primary hydroxy group in a similar glucan chain.. Its pathway is glycan biosynthesis; glycogen biosynthesis. Catalyzes the formation of the alpha-1,6-glucosidic linkages in glycogen by scission of a 1,4-alpha-linked oligosaccharide from growing alpha-1,4-glucan chains and the subsequent attachment of the oligosaccharide to the alpha-1,6 position. This Dechloromonas aromatica (strain RCB) protein is 1,4-alpha-glucan branching enzyme GlgB.